A 224-amino-acid chain; its full sequence is Haloacetate dehalogenase H-2 (224 aa).

The active-site Nucleophile is the Asp10.

This sequence belongs to the HAD-like hydrolase superfamily. S-2-haloalkanoic acid dehalogenase family.

It carries out the reaction a haloacetate + H2O = a halide anion + glycolate + H(+). This chain is Haloacetate dehalogenase H-2 (dehH2), found in Moraxella sp. (strain B).